A 420-amino-acid chain; its full sequence is NEDD8-specific protease 1 (420 aa).

The span at 257–281 shows a compositional bias: low complexity; it reads KSSDSSETSHESSNSNLKKSSESGS. The disordered stretch occupies residues 257 to 420; the sequence is KSSDSSETSH…EELVSGDFPF (164 aa). Residues 286 to 296 show a composition bias toward basic and acidic residues; it reads NNHESDKDLHH. Over residues 297–310 the composition is skewed to basic residues; that stretch reads EGHHHHHHHHHHHH. The span at 311 to 324 shows a compositional bias: basic and acidic residues; sequence SHDDDPSSPAEKKQ. Residues serine 329, serine 340, and serine 351 each carry the phosphoserine modification. The segment covering 355 to 377 has biased composition (basic and acidic residues); the sequence is NKEDHLPLLSDEKLDKSAIDKIE.

The protein belongs to the peptidase C48 family. Interacts with csn1. It is, however, not a component of the signalosome.

The protein localises to the cytoplasm. Its function is as follows. Protease that catalyzes two essential functions in the NEDD8 pathway: processing of full-length NEDD8 to its mature form and deconjugation of NEDD8 from targeted proteins such as the pcu1, pcu2 and pcu4 cullins and other proteins. This Schizosaccharomyces pombe (strain 972 / ATCC 24843) (Fission yeast) protein is NEDD8-specific protease 1 (nep1).